The primary structure comprises 184 residues: CKLF-like MARVEL transmembrane domain-containing protein 3 (184 aa).

Residues 1-12 (MWPPDAEPEPDP) are compositionally biased toward acidic residues. The segment at 1–22 (MWPPDAEPEPDPESAHGPRSGR) is disordered. The 120-residue stretch at 36 to 155 (FLCSLKGRLL…DFYLIFNEVA (120 aa)) folds into the MARVEL domain. The next 3 helical transmembrane spans lie at 64-84 (ASAF…FLFA), 96-116 (LCWP…YFVI), and 131-151 (AAGV…YLIF). The interval 163–184 (SGNETTAHRTEEENSNSDSDSD) is disordered. The span at 175 to 184 (ENSNSDSDSD) shows a compositional bias: acidic residues.

The protein belongs to the chemokine-like factor family.

Its subcellular location is the membrane. The sequence is that of CKLF-like MARVEL transmembrane domain-containing protein 3 (Cmtm3) from Mus musculus (Mouse).